A 317-amino-acid polypeptide reads, in one-letter code: U5 small nuclear ribonucleoprotein TSSC4 (317 aa).

A compositionally biased stretch (acidic residues) spans 1 to 19 (MAETEAGLEVEEPTEDDTL). Residues 1 to 78 (MAETEAGLEV…IPTTAVQPFH (78 aa)) form a disordered region. A compositionally biased stretch (low complexity) spans 20-37 (PSDTVSLSDSDSDLSLPS). Ser-57, Ser-64, Ser-83, and Ser-92 each carry phosphoserine. A hom2; mediates interaction with the U5 snRNP complexes and required for spliceosomal tri-snRNP complex assembly region spans residues 74–101 (VQPFHLRGMSSTFSQRSHSIFDCLESAA). The segment at 123 to 151 (VAPPSQTPARSLSRVHGNTDPTRVHPVPD) is disordered. An interaction with SNRNP200 region spans residues 146 to 300 (VHPVPDYVSH…SKKRSRDHFR (155 aa)). Positions 147–183 (HPVPDYVSHPERWTKYSLEDVSETSEQSNRDAALAFL) are hom3; mediates interaction with the U5 snRNP complexes. The hom4; necessary for interaction with the PRPF19 complex and required for spliceosomal tri-snRNP complex assembly stretch occupies residues 198–238 (FNQDPSSCGEGRVVFTKPVRGSEARAERKRVLKKGVVSGAG). Lys-214 bears the N6-acetyllysine mark. Positions 247–317 (HLAGPEAEEW…GPGSERGPSV (71 aa)) are disordered.

The protein belongs to the TSSC4 family. As to quaternary structure, interacts in a RNA-independent manner with distinct U5 snRNP-containing complexes, the mono-U5 snRNP and the post-splicing U5 snRNP-PRPF19 complex. Interacts with SNRNP200; the interaction is direct, excludes recruitment of C9ORF78 and WBP4 to SNRNP200 and negatively regulates its RNA helicase activity. Interacts with PRPF8; the interaction is direct.

Its subcellular location is the nucleus. It is found in the cytoplasm. In terms of biological role, protein associated with the U5 snRNP, during its maturation and its post-splicing recycling and which is required for spliceosomal tri-snRNP complex assembly in the nucleus. Has a molecular sequestering activity and transiently hinders SNRNP200 binding sites for constitutive splicing factors that intervene later during the assembly of the spliceosome and splicing. Together with its molecular sequestering activity, may also function as a molecular adapter and placeholder, coordinating the assembly of the U5 snRNP and its association with the U4/U6 di-snRNP. The sequence is that of U5 small nuclear ribonucleoprotein TSSC4 from Rattus norvegicus (Rat).